Here is a 383-residue protein sequence, read N- to C-terminus: tRNA-specific 2-thiouridylase MnmA (383 aa).

Residues 9–16 and Met35 contribute to the ATP site; that span reads GMSGGVDS. The tract at residues 95–97 is interaction with target base in tRNA; sequence NPD. Residue Cys100 is the Nucleophile of the active site. A disulfide bridge links Cys100 with Cys196. Gly124 is a binding site for ATP. Positions 146–148 are interaction with tRNA; it reads KDQ. Cys196 functions as the Cysteine persulfide intermediate in the catalytic mechanism. The interaction with tRNA stretch occupies residues 308–309; the sequence is RY.

Belongs to the MnmA/TRMU family.

It localises to the cytoplasm. The enzyme catalyses S-sulfanyl-L-cysteinyl-[protein] + uridine(34) in tRNA + AH2 + ATP = 2-thiouridine(34) in tRNA + L-cysteinyl-[protein] + A + AMP + diphosphate + H(+). Its function is as follows. Catalyzes the 2-thiolation of uridine at the wobble position (U34) of tRNA, leading to the formation of s(2)U34. The sequence is that of tRNA-specific 2-thiouridylase MnmA from Burkholderia mallei (strain NCTC 10247).